The chain runs to 386 residues: Chorismate synthase (386 aa).

The segment at 32–60 (LPLSEDDVQRELDRRRPGQSGVSTPRSER) is disordered. The segment covering 38–47 (DVQRELDRRR) has biased composition (basic and acidic residues). Residue R46 coordinates NADP(+). Residues 123 to 125 (RAS), G290, 305 to 309 (KPTPS), and R332 contribute to the FMN site.

This sequence belongs to the chorismate synthase family. The cofactor is FMNH2.

The catalysed reaction is 5-O-(1-carboxyvinyl)-3-phosphoshikimate = chorismate + phosphate. It participates in metabolic intermediate biosynthesis; chorismate biosynthesis; chorismate from D-erythrose 4-phosphate and phosphoenolpyruvate: step 7/7. Functionally, catalyzes the anti-1,4-elimination of the C-3 phosphate and the C-6 proR hydrogen from 5-enolpyruvylshikimate-3-phosphate (EPSP) to yield chorismate, which is the branch point compound that serves as the starting substrate for the three terminal pathways of aromatic amino acid biosynthesis. This reaction introduces a second double bond into the aromatic ring system. In Methanopyrus kandleri (strain AV19 / DSM 6324 / JCM 9639 / NBRC 100938), this protein is Chorismate synthase.